Here is a 402-residue protein sequence, read N- to C-terminus: Arginine deiminase (402 aa).

Cysteine 392 serves as the catalytic Amidino-cysteine intermediate.

It belongs to the arginine deiminase family.

It is found in the cytoplasm. It catalyses the reaction L-arginine + H2O = L-citrulline + NH4(+). The protein operates within amino-acid degradation; L-arginine degradation via ADI pathway; carbamoyl phosphate from L-arginine: step 1/2. This chain is Arginine deiminase, found in Mycolicibacterium gilvum (strain PYR-GCK) (Mycobacterium gilvum (strain PYR-GCK)).